A 98-amino-acid polypeptide reads, in one-letter code: Small ribosomal subunit protein uS17 (98 aa).

It belongs to the universal ribosomal protein uS17 family. Part of the 30S ribosomal subunit.

Functionally, one of the primary rRNA binding proteins, it binds specifically to the 5'-end of 16S ribosomal RNA. This chain is Small ribosomal subunit protein uS17, found in Synechococcus sp. (strain CC9605).